Reading from the N-terminus, the 84-residue chain is Apoptosis inhibitor Rv3654c (84 aa).

A signal peptide spans 1–39 (MVARHRAQAAADLASLAAAARLPSGLAAACARATLVARA).

Interacts with human polypyrimidine tract binding protein-associated splicing factor (PSF).

Its subcellular location is the secreted. The protein resides in the host cytoplasm. Its function is as follows. Effector protein that participates in the suppression of macrophage apoptosis by blocking the extrinsic pathway. Recognizes the host polypyrimidine tract binding protein-associated splicing factor (PSF), which probably leads to its cleavage, diminishing the level of caspase-8 in macrophages. This chain is Apoptosis inhibitor Rv3654c, found in Mycobacterium tuberculosis (strain ATCC 25618 / H37Rv).